The following is a 1226-amino-acid chain: MAGSNIKVQIEKQLSERILLIDGGMGTMIQGYKFEEKDYRGGRFNQWHCDLKGNNDLLVLSQPQIIRDIHEAYLEAGADILETNTFNATTIAMADYDMESLSEEINFEAAKLAREVADKWTEKTPNKPRYVAGVLGPTNRTCSISPDVNDPGFRNVSFDELVEAYSESTRALIRGGSDLILIETIFDTLNAKACSFAVESVFEELGITLPVMISGTITDASGRTLSGQTTEAFYNALRHVKPISFGLNCALGPDELREYVSELSRISECYVSAHPNAGLPNAFGEYDLSPEDMAEHVAEWASSGFLNLIGGCCGTTPEHIRQMALVVEGVKPRQLPELPVACRLSGLEPLTIEKDSLFINVGERTNVTGSARFKRLIKEELYDEALSVAQEQVENGAQIIDINMDEGMLDAEACMVRFLNLCASEPEISKVPVMVDSSKWEVIEAGLKCIQGKGIVNSISLKEGKEKFVHQAKLIRRYGAAVIVMAFDEVGQADTRERKIEICTNAYNILVDEVGFPPEDIIFDPNIFAVATGIDEHNNYAVDFIEAVGDIKRTLPHAMISGGVSNVSFSFRGNNYVREAIHAVFLYHCFKNGMDMGIVNAGQLEIYDNVPEDLREAVEDVVLNRRDDSTERLLDIATEYLERAVGKVEDKSALEWRDWPVEKRLEHSLVKGITEFIVEDTEEARINAERPIEVIEGPLMDGMNVVGDLFGEGKMFLPQVVKSARVMKQAVAHLEPFINASKEVGATNGKILLATVKGDVHDIGKNIVGVVLQCNNYEIIDLGVMVSCETILKVAKEENVDIIGLSGLITPSLDEMVHVAKEMERQGFDLPLLIGGATTSKAHTAVKIEQNYSQPVVYVNNASRAVGVCTSLLSNELKPSFVEKLDIDYERVREQHSRKQPRTKPVTLEVARANKVAIDWASYTPPVPLKPGVHIFDNFDVSTLRNYIDWTPFFMTWSLVGKYPKILEHEEVGEEAKRLFKDANDLLDRVEKEGLLKARGMCALFPASSVGDDIEVYTDESRTTVAKVLHNLRQQTEKPKGFNYCLSDYIAPKESGKNDWIGGFAVTGGIGERELADEYKANGDDYNAIMIQAVADRLAEAFAEYLHEKVRKEIWGYSPNETLSNDDLIREKYQGIRPAPGYPACPEHTEKGALWELMNVEESIGMSLTSSYAMWPGASVSGMYFSHPDSRYFAIAQIQQDQAESYADRKGWNMLEAEKWLGPNLN.

The Hcy-binding domain maps to 7–327; the sequence is KVQIEKQLSE…EHIRQMALVV (321 aa). Zn(2+) contacts are provided by Cys249, Cys312, and Cys313. The Pterin-binding domain occupies 358–619; it reads FINVGERTNV…VPEDLREAVE (262 aa). The B12-binding N-terminal domain maps to 652–746; that stretch reads SALEWRDWPV…FINASKEVGA (95 aa). Methylcob(III)alamin is bound by residues Glu696, 758–762, His761, Ser806, Thr810, and Ala862; that span reads GDVHD. Positions 748–883 constitute a B12-binding domain; sequence NGKILLATVK…SNELKPSFVE (136 aa). The 328-residue stretch at 899–1226 folds into the AdoMet activation domain; the sequence is KQPRTKPVTL…AEKWLGPNLN (328 aa). S-adenosyl-L-methionine contacts are provided by residues Asp949, Arg1137, and 1192-1193; that span reads YF.

This sequence belongs to the vitamin-B12 dependent methionine synthase family. Requires methylcob(III)alamin as cofactor. Zn(2+) is required as a cofactor.

The enzyme catalyses (6S)-5-methyl-5,6,7,8-tetrahydrofolate + L-homocysteine = (6S)-5,6,7,8-tetrahydrofolate + L-methionine. It functions in the pathway amino-acid biosynthesis; L-methionine biosynthesis via de novo pathway; L-methionine from L-homocysteine (MetH route): step 1/1. Catalyzes the transfer of a methyl group from methyl-cobalamin to homocysteine, yielding enzyme-bound cob(I)alamin and methionine. Subsequently, remethylates the cofactor using methyltetrahydrofolate. This chain is Methionine synthase (metH), found in Aliivibrio fischeri (Vibrio fischeri).